The sequence spans 289 residues: Phosphatidylserine decarboxylase proenzyme (289 aa).

Active-site charge relay system; for autoendoproteolytic cleavage activity residues include aspartate 92, histidine 149, and serine 254. Residue serine 254 is the Schiff-base intermediate with substrate; via pyruvic acid; for decarboxylase activity of the active site. Serine 254 carries the post-translational modification Pyruvic acid (Ser); by autocatalysis.

It belongs to the phosphatidylserine decarboxylase family. PSD-B subfamily. Prokaryotic type I sub-subfamily. As to quaternary structure, heterodimer of a large membrane-associated beta subunit and a small pyruvoyl-containing alpha subunit. Pyruvate serves as cofactor. Is synthesized initially as an inactive proenzyme. Formation of the active enzyme involves a self-maturation process in which the active site pyruvoyl group is generated from an internal serine residue via an autocatalytic post-translational modification. Two non-identical subunits are generated from the proenzyme in this reaction, and the pyruvate is formed at the N-terminus of the alpha chain, which is derived from the carboxyl end of the proenzyme. The autoendoproteolytic cleavage occurs by a canonical serine protease mechanism, in which the side chain hydroxyl group of the serine supplies its oxygen atom to form the C-terminus of the beta chain, while the remainder of the serine residue undergoes an oxidative deamination to produce ammonia and the pyruvoyl prosthetic group on the alpha chain. During this reaction, the Ser that is part of the protease active site of the proenzyme becomes the pyruvoyl prosthetic group, which constitutes an essential element of the active site of the mature decarboxylase.

The protein localises to the cell membrane. It catalyses the reaction a 1,2-diacyl-sn-glycero-3-phospho-L-serine + H(+) = a 1,2-diacyl-sn-glycero-3-phosphoethanolamine + CO2. Its pathway is phospholipid metabolism; phosphatidylethanolamine biosynthesis; phosphatidylethanolamine from CDP-diacylglycerol: step 2/2. Catalyzes the formation of phosphatidylethanolamine (PtdEtn) from phosphatidylserine (PtdSer). The polypeptide is Phosphatidylserine decarboxylase proenzyme (Pseudomonas aeruginosa (strain LESB58)).